Consider the following 292-residue polypeptide: Large ribosomal subunit protein uL4 (292 aa).

Composition is skewed to basic and acidic residues over residues 1–33 (MVEV…DKTA) and 42–51 (KVSDKAESTP). Disordered regions lie at residues 1–59 (MVEV…VKTS) and 132–158 (GTHK…TGKA).

This sequence belongs to the universal ribosomal protein uL4 family. As to quaternary structure, part of the 50S ribosomal subunit.

Its function is as follows. One of the primary rRNA binding proteins, this protein initially binds near the 5'-end of the 23S rRNA. It is important during the early stages of 50S assembly. It makes multiple contacts with different domains of the 23S rRNA in the assembled 50S subunit and ribosome. In terms of biological role, forms part of the polypeptide exit tunnel. In Mycoplasmopsis pulmonis (strain UAB CTIP) (Mycoplasma pulmonis), this protein is Large ribosomal subunit protein uL4.